Here is a 159-residue protein sequence, read N- to C-terminus: Large ribosomal subunit protein uL10 (159 aa).

Belongs to the universal ribosomal protein uL10 family. In terms of assembly, part of the ribosomal stalk of the 50S ribosomal subunit. The N-terminus interacts with L11 and the large rRNA to form the base of the stalk. The C-terminus forms an elongated spine to which L12 dimers bind in a sequential fashion forming a multimeric L10(L12)X complex.

In terms of biological role, forms part of the ribosomal stalk, playing a central role in the interaction of the ribosome with GTP-bound translation factors. The sequence is that of Large ribosomal subunit protein uL10 from Campylobacter lari (strain RM2100 / D67 / ATCC BAA-1060).